Consider the following 98-residue polypeptide: NADH-ubiquinone oxidoreductase chain 4L (98 aa).

3 helical membrane-spanning segments follow: residues Met1–Met21, Ser29–Leu49, and Ile61–Val81.

Belongs to the complex I subunit 4L family. As to quaternary structure, core subunit of respiratory chain NADH dehydrogenase (Complex I) which is composed of 45 different subunits.

The protein localises to the mitochondrion inner membrane. The catalysed reaction is a ubiquinone + NADH + 5 H(+)(in) = a ubiquinol + NAD(+) + 4 H(+)(out). Functionally, core subunit of the mitochondrial membrane respiratory chain NADH dehydrogenase (Complex I) which catalyzes electron transfer from NADH through the respiratory chain, using ubiquinone as an electron acceptor. Part of the enzyme membrane arm which is embedded in the lipid bilayer and involved in proton translocation. The sequence is that of NADH-ubiquinone oxidoreductase chain 4L (MT-ND4L) from Capra hircus (Goat).